The following is an 848-amino-acid chain: MSPGYLPAPKAVLGSVPEKHLAEEDEVDSILLSASKILNSSEGVKESGGNEPEYGCASEPENQIQPQSALKVLQHQLESFQALRMQTLQNVSMVQSEISEILNKSIVEVETPQFNSEKSLVFSMHPEKDLPNETQEEIPSTKTLHSMGETFSSNSDTGLPQGTDIPPQIQVKDMLALQGLRTTADNSPPKKAMNTSEQPSATKSFSLYQFLPQGPQTAVPQAAPVILDKSTITTPFPKHGFCANLDDICHSIKHMKEELQKSHDKELALTSELHTFQADASTQGHHKHEPFPMHSSKLNFIQQENMEGNLSEDMKSKRISELEALVSKLLPLRDTVSKLHVNFCRKCKKLSKSEVYRGKKNEKNKDIPITSKNIMDLKFHSRAPRYTLSVLDLGKHKIKDKEGQAFIVSQGPATLENEKLPKGKFIPEQCVPKQSVAKIHYLQNYLKESLQNQKKMTELENENLALKTKMKPLVFTAQSLIQKVEAHEKQLKSLAEEKSALQSKLSKAEEENKDCLRELKKIVSTYNVLGGQHKMLEEKNSQLSLEKQQMLETIDHLKSKEHKSQSDMAVLQNENSRMNIEIEAMKTSMLLVQDEREMLEKETYQLLKDKSTLESDLKESKLEILQLKEKERLIKAEQESLLHSLDTAKAEKLSLEATLQESTSTRQKLERKLVDIQAYQSAAEEKFLKEIKSAKSETSIYKNNLAEISKECEILSKMVMEIKADNQILKEELKKHSQENTKFENSISRLTEDKILLENYVRSIENEKDTLEFEMRNLQRDYLSLSDKVSSQNNSASKSTYISRREKLYFDNYDAYEDASSLRNRPVASDLKGIPHKLYQRLPSKICK.

The tract at residues 41 to 62 (SEGVKESGGNEPEYGCASEPEN) is disordered. Residues 442-794 (LQNYLKESLQ…LSDKVSSQNN (353 aa)) are a coiled coil. Phosphoserine is present on S620.

It is found in the nucleus. This chain is Coiled-coil domain-containing protein 110 (Ccdc110), found in Mus musculus (Mouse).